The chain runs to 1111 residues: Zinc finger protein GLI1 (1111 aa).

The interval 52–78 is disordered; the sequence is GYGAARETSSCTEGSLFPPPPPPRSSV. The tract at residues 123-127 is interaction with SUFU; the sequence is SYGHL. 5 C2H2-type zinc fingers span residues 238-263, 271-298, 304-328, 334-359, and 365-390; these read TDCR…NSEH, FVCH…MRRH, HKCT…LRSH, YMCE…NRTH, and YVCK…KTVH. The interaction with DNA stretch occupies residues 286–294; it reads KAQYMLVVH. Interaction with DNA stretches follow at residues 348 to 353 and 378 to 384; these read ASDRAK and DPSSLRK. Residues 378–487 form a disordered region; it reads DPSSLRKHVK…EDLSSLDEGP (110 aa). A compositionally biased stretch (basic and acidic residues) spans 416–431; sequence EPKREREGGSGREESR. Positions 439-465 are enriched in polar residues; sequence MPQQSPGAQSSCSSDHSPAGSAANTDS. Position 520 is an N6-acetyllysine (Lys520). 4 disordered regions span residues 528 to 583, 598 to 649, 673 to 692, and 832 to 891; these read GAPV…LPGL, ARGS…RAAD, TGRN…QPPS, and PCLN…SSHS. A compositionally biased stretch (low complexity) spans 546 to 562; it reads SSSSSMSSAYTVSRRSS. Positions 640-649 are enriched in basic and acidic residues; the sequence is RASDPARAAD. Residues 855–870 show a composition bias toward pro residues; sequence LPQPQYPQSGPYPQPP. Residue Lys1008 forms a Glycyl lysine isopeptide (Lys-Gly) (interchain with G-Cter in SUMO2) linkage. The segment at 1064–1093 is disordered; the sequence is LSPPLSHEQGDSSKNTPSPSGPPNMAVGNM.

This sequence belongs to the GLI C2H2-type zinc-finger protein family. Interacts with KIF7. Interacts with STK36. Interacts with ZIC1; the interaction enhances transcription activation. Interacts with SUFU; this inhibits transcriptional activation by GLI1. Post-translationally, phosphorylated in vitro by ULK3. Acetylation at Lys-520 down-regulates transcriptional activity. Deacetylated by HDAC1. In terms of processing, ubiquitinated by the CRL2(FEM1B) complex, suppressing GLI1 transcriptional activator activity.

It is found in the cytoplasm. Its subcellular location is the nucleus. In terms of biological role, acts as a transcriptional activator. Binds to the DNA consensus sequence 5'-GACCACCCA-3'. Regulates the transcription of specific genes during normal development. Plays a role in craniofacial development and digital development, as well as development of the central nervous system and gastrointestinal tract. Mediates SHH signaling. Plays a role in cell proliferation and differentiation via its role in SHH signaling. This is Zinc finger protein GLI1 (Gli1) from Mus musculus (Mouse).